We begin with the raw amino-acid sequence, 169 residues long: Inorganic pyrophosphatase (169 aa).

The residue at position 1 (Met1) is an N-formylmethionine. Substrate contacts are provided by Lys28, Arg42, and Tyr54. Positions 64, 69, and 101 each coordinate Mg(2+). Tyr138 provides a ligand contact to substrate.

It belongs to the PPase family. In terms of assembly, homohexamer. Requires Mg(2+) as cofactor.

The protein localises to the cytoplasm. The catalysed reaction is diphosphate + H2O = 2 phosphate + H(+). Inhibited by ATP, but not by fructose 1,6-bisphosphate or 2-phosphoglycerate. Functionally, hydrolyzes PPi generated in anabolic reactions. Its function is as follows. Catalyzes the hydrolysis of inorganic pyrophosphate (PPi) forming two phosphate ions. This Synechocystis sp. (strain ATCC 27184 / PCC 6803 / Kazusa) protein is Inorganic pyrophosphatase.